The chain runs to 714 residues: DNA ligase (714 aa).

NAD(+)-binding positions include 47 to 51 (DAEYD), 96 to 97 (SL), and Glu128. Catalysis depends on Lys130, which acts as the N6-AMP-lysine intermediate. NAD(+)-binding residues include Arg151, Glu188, Lys306, and Lys330. Zn(2+) is bound by residues Cys435, Cys438, Cys453, and Cys459. Residues 637–714 (RRDTAVAGKT…TEDEWLALIS (78 aa)) enclose the BRCT domain.

The protein belongs to the NAD-dependent DNA ligase family. LigA subfamily. Requires Mg(2+) as cofactor. Mn(2+) is required as a cofactor.

It carries out the reaction NAD(+) + (deoxyribonucleotide)n-3'-hydroxyl + 5'-phospho-(deoxyribonucleotide)m = (deoxyribonucleotide)n+m + AMP + beta-nicotinamide D-nucleotide.. In terms of biological role, DNA ligase that catalyzes the formation of phosphodiester linkages between 5'-phosphoryl and 3'-hydroxyl groups in double-stranded DNA using NAD as a coenzyme and as the energy source for the reaction. It is essential for DNA replication and repair of damaged DNA. In Rhodopseudomonas palustris (strain HaA2), this protein is DNA ligase.